A 312-amino-acid chain; its full sequence is Ribosomal protein L11 methyltransferase (312 aa).

S-adenosyl-L-methionine is bound by residues Thr162, Gly183, Asp205, and Asn248.

It belongs to the methyltransferase superfamily. PrmA family.

It localises to the cytoplasm. It catalyses the reaction L-lysyl-[protein] + 3 S-adenosyl-L-methionine = N(6),N(6),N(6)-trimethyl-L-lysyl-[protein] + 3 S-adenosyl-L-homocysteine + 3 H(+). Methylates ribosomal protein L11. The polypeptide is Ribosomal protein L11 methyltransferase (Geobacillus thermodenitrificans (strain NG80-2)).